Consider the following 488-residue polypeptide: MSQSVESRTRIKSERYESGVIPYAKMGYWDADYVIKETDILALFRITPQPGVDPIEASAAIAGESSTATWTVVWTDLLTACDLYRAKAYRVDPVPNVADQYFAYIAYDIDLFEEGSIANLTASIIGNVFGFKAVKALRLEDMRMPVAYLKTFQGPATGLIVERERMDKFGRPFLGATVKPKLGLSGKNYGRVVYEGLKGGLDFLKDDENINSQPFMRWRERFLYSMEGVNKASASAGEIKGHYLNVTAATMEDMYERAEFSKEVGSIICMIDLVIGYTAIQSMAIWARKHDMILHLHRAGNSTYSRQKNHGMNFRVICKWMRMAGVDHIHAGTVVGKLEGDPLMIKGFYNTLLESDTDINLPQGLFFAQNWASLRKVVPVASGGIHAGQMHQLLDYLGDDVVLQFGGGTIGHPDGIQAGATANRVALESMVMARNEGRNYVAEGPQILRDAAKTCGPLQTALDLWKDISFNYTSTDTADFVETPTANI.

The substrate site is built by asparagine 127 and threonine 177. Lysine 179 acts as the Proton acceptor in catalysis. Lysine 181 is a binding site for substrate. Residues lysine 205, aspartate 207, and glutamate 208 each contribute to the Mg(2+) site. Lysine 205 is modified (N6-carboxylysine). The active-site Proton acceptor is histidine 297. Residues arginine 298, histidine 330, and serine 382 each coordinate substrate.

It belongs to the RuBisCO large chain family. Type I subfamily. Heterohexadecamer of 8 large chains and 8 small chains. It depends on Mg(2+) as a cofactor.

It localises to the plastid. It is found in the chloroplast. The enzyme catalyses 2 (2R)-3-phosphoglycerate + 2 H(+) = D-ribulose 1,5-bisphosphate + CO2 + H2O. The catalysed reaction is D-ribulose 1,5-bisphosphate + O2 = 2-phosphoglycolate + (2R)-3-phosphoglycerate + 2 H(+). Functionally, ruBisCO catalyzes two reactions: the carboxylation of D-ribulose 1,5-bisphosphate, the primary event in carbon dioxide fixation, as well as the oxidative fragmentation of the pentose substrate in the photorespiration process. Both reactions occur simultaneously and in competition at the same active site. This Pyropia yezoensis (Susabi-nori) protein is Ribulose bisphosphate carboxylase large chain.